Here is a 101-residue protein sequence, read N- to C-terminus: Urease subunit beta (101 aa).

Belongs to the urease beta subunit family. Heterotrimer of UreA (gamma), UreB (beta) and UreC (alpha) subunits. Three heterotrimers associate to form the active enzyme.

It is found in the cytoplasm. It carries out the reaction urea + 2 H2O + H(+) = hydrogencarbonate + 2 NH4(+). It participates in nitrogen metabolism; urea degradation; CO(2) and NH(3) from urea (urease route): step 1/1. The protein is Urease subunit beta of Burkholderia ambifaria (strain ATCC BAA-244 / DSM 16087 / CCUG 44356 / LMG 19182 / AMMD) (Burkholderia cepacia (strain AMMD)).